Reading from the N-terminus, the 205-residue chain is Probable 3'-5' exonuclease KapD (205 aa).

Residues leucine 6–phenylalanine 173 form the Exonuclease domain. Mg(2+)-binding residues include aspartate 10, glutamate 12, and aspartate 104. The Proton acceptor role is filled by glutamate 12. Glutamate 12 serves as a coordination point for AMP. Histidine 160 serves as the catalytic Proton acceptor. An AMP-binding site is contributed by histidine 160. Aspartate 165 serves as a coordination point for Mg(2+).

It depends on Mg(2+) as a cofactor.

Specifically inhibits the KinA pathway to sporulation. This chain is Probable 3'-5' exonuclease KapD (kapD), found in Bacillus subtilis (strain 168).